Reading from the N-terminus, the 490-residue chain is ATP synthase subunit beta (490 aa).

175–182 contributes to the ATP binding site; that stretch reads GGAGVGKT.

This sequence belongs to the ATPase alpha/beta chains family. In terms of assembly, F-type ATPases have 2 components, CF(1) - the catalytic core - and CF(0) - the membrane proton channel. CF(1) has five subunits: alpha(3), beta(3), gamma(1), delta(1), epsilon(1). CF(0) has three main subunits: a(1), b(2) and c(9-12). The alpha and beta chains form an alternating ring which encloses part of the gamma chain. CF(1) is attached to CF(0) by a central stalk formed by the gamma and epsilon chains, while a peripheral stalk is formed by the delta and b chains.

The protein localises to the cell membrane. It catalyses the reaction ATP + H2O + 4 H(+)(in) = ADP + phosphate + 5 H(+)(out). In terms of biological role, produces ATP from ADP in the presence of a proton gradient across the membrane. The catalytic sites are hosted primarily by the beta subunits. The polypeptide is ATP synthase subunit beta (Acidothermus cellulolyticus (strain ATCC 43068 / DSM 8971 / 11B)).